Here is a 473-residue protein sequence, read N- to C-terminus: Siroheme synthase 1 (473 aa).

The segment at 1–204 is precorrin-2 dehydrogenase /sirohydrochlorin ferrochelatase; that stretch reads MDYFPIFCQL…NDHVQADQHV (204 aa). Residues 22–23 and 43–44 contribute to the NAD(+) site; these read EI and CE. Residue serine 128 is modified to Phosphoserine. Residues 216 to 473 are uroporphyrinogen-III C-methyltransferase; the sequence is GEVVLVGAGP…KVTECVAHVG (258 aa). Residue proline 225 participates in S-adenosyl-L-methionine binding. Residue aspartate 248 is the Proton acceptor of the active site. Lysine 270 (proton donor) is an active-site residue. Residues 301 to 303, isoleucine 306, 331 to 332, methionine 382, and glycine 411 each bind S-adenosyl-L-methionine; these read GGD and TA.

It in the N-terminal section; belongs to the precorrin-2 dehydrogenase / sirohydrochlorin ferrochelatase family. The protein in the C-terminal section; belongs to the precorrin methyltransferase family.

It catalyses the reaction uroporphyrinogen III + 2 S-adenosyl-L-methionine = precorrin-2 + 2 S-adenosyl-L-homocysteine + H(+). It carries out the reaction precorrin-2 + NAD(+) = sirohydrochlorin + NADH + 2 H(+). The catalysed reaction is siroheme + 2 H(+) = sirohydrochlorin + Fe(2+). Its pathway is cofactor biosynthesis; adenosylcobalamin biosynthesis; precorrin-2 from uroporphyrinogen III: step 1/1. It participates in cofactor biosynthesis; adenosylcobalamin biosynthesis; sirohydrochlorin from precorrin-2: step 1/1. It functions in the pathway porphyrin-containing compound metabolism; siroheme biosynthesis; precorrin-2 from uroporphyrinogen III: step 1/1. The protein operates within porphyrin-containing compound metabolism; siroheme biosynthesis; siroheme from sirohydrochlorin: step 1/1. Its pathway is porphyrin-containing compound metabolism; siroheme biosynthesis; sirohydrochlorin from precorrin-2: step 1/1. Multifunctional enzyme that catalyzes the SAM-dependent methylations of uroporphyrinogen III at position C-2 and C-7 to form precorrin-2 via precorrin-1. Then it catalyzes the NAD-dependent ring dehydrogenation of precorrin-2 to yield sirohydrochlorin. Finally, it catalyzes the ferrochelation of sirohydrochlorin to yield siroheme. In Yersinia pestis (strain Pestoides F), this protein is Siroheme synthase 1.